A 217-amino-acid polypeptide reads, in one-letter code: MKVFEFLKGKRGAMGIGTLIIFIAMVLVAAVAAAVLINTSGFLQQKAMATGKESTEQVASGLMCIGVTGHYDKTLGGIDKLAIYITPNAGSAPIDLKNAKLFLIYDGESHVLNYSTVTTATLGADDIFNSSAITDWSLADSSSYVVGVIQDADGSLSNGVINKGDIAVLLVNANAVFNKAIPTRSEVSGQFQPEFGAPAVIQFTTPAAYTQTVIELQ.

Residues 1-12 (MKVFEFLKGKRG) constitute a propeptide that is removed on maturation.

This sequence belongs to the archaeal flagellin family.

Its subcellular location is the archaeal flagellum. In terms of biological role, flagellin is the subunit protein which polymerizes to form the filaments of archaeal flagella. The chain is Flagellin B1 (flaB1) from Methanocaldococcus jannaschii (strain ATCC 43067 / DSM 2661 / JAL-1 / JCM 10045 / NBRC 100440) (Methanococcus jannaschii).